The chain runs to 394 residues: GDSL esterase/lipase At2g27360 (394 aa).

The first 24 residues, 1 to 24 (MASQDCHMLLSFFISTFLITVVTS), serve as a signal peptide directing secretion. Catalysis depends on serine 40, which acts as the Nucleophile. Asparagine 136 and asparagine 319 each carry an N-linked (GlcNAc...) asparagine glycan. Catalysis depends on residues aspartate 344 and histidine 347. N-linked (GlcNAc...) asparagine glycans are attached at residues asparagine 371 and asparagine 382.

The protein belongs to the 'GDSL' lipolytic enzyme family.

It localises to the secreted. This Arabidopsis thaliana (Mouse-ear cress) protein is GDSL esterase/lipase At2g27360.